The chain runs to 137 residues: ATP synthase epsilon chain (137 aa).

Belongs to the ATPase epsilon chain family. F-type ATPases have 2 components, CF(1) - the catalytic core - and CF(0) - the membrane proton channel. CF(1) has five subunits: alpha(3), beta(3), gamma(1), delta(1), epsilon(1). CF(0) has three main subunits: a, b and c.

It is found in the cell membrane. Produces ATP from ADP in the presence of a proton gradient across the membrane. The polypeptide is ATP synthase epsilon chain (Streptococcus agalactiae serotype Ia (strain ATCC 27591 / A909 / CDC SS700)).